The chain runs to 425 residues: MTRLDSVERAVADIGAGKAVIVIDDEDRENEGDLIFAAEKATPELVAFMVRYTSGYLCVPLDGAVCDRLGLLPMYAVNQDKHGTAYTVTVDAKNGVGTGISASDRATTMRLLADPASVAEDFTRPGHVVPLRAKDGGVLRRPGHTEAAVDLARMAGLQPAGAICEIVSRKDEGSMAQTDELRVFADEHGLALITIADLIEWRRKHEKHIERVAEARIPTRRGEFRAIGYTSIYENVEHVALVRGEIAGPNSDGDDVLVRVHSECLTGDVFGSRRCDCGSQLDAAMAMVAREGRGVVLYMRGHEGRGIGLLHKLQTYQLQDAGDDTVDANLKLGLPADARDYGIGAQILVDLGVRSMRLLTNNPAKRVGLDGYGLHIIERVPLPVRANAENIRYLMTKRDRMGHDLTGLDDFHESVHLPGEFGGAL.

A DHBP synthase region spans residues Met1 to Lys204. D-ribulose 5-phosphate contacts are provided by residues Arg28 to Glu29, Asp33, Arg141 to Thr145, and Glu165. Position 29 (Glu29) interacts with Mg(2+). His144 is a binding site for Mg(2+). Residues His205 to Leu425 form a GTP cyclohydrolase II region. Arg259 to Glu263 contributes to the GTP binding site. 3 residues coordinate Zn(2+): Cys264, Cys275, and Cys277. Residues Gln280, Glu303 to Arg305, and Thr325 contribute to the GTP site. The active-site Proton acceptor; for GTP cyclohydrolase activity is Asp337. Arg339 serves as the catalytic Nucleophile; for GTP cyclohydrolase activity. The GTP site is built by Thr360 and Lys365.

In the N-terminal section; belongs to the DHBP synthase family. It in the C-terminal section; belongs to the GTP cyclohydrolase II family. The cofactor is Mg(2+). Requires Mn(2+) as cofactor. Zn(2+) is required as a cofactor.

The enzyme catalyses D-ribulose 5-phosphate = (2S)-2-hydroxy-3-oxobutyl phosphate + formate + H(+). It catalyses the reaction GTP + 4 H2O = 2,5-diamino-6-hydroxy-4-(5-phosphoribosylamino)-pyrimidine + formate + 2 phosphate + 3 H(+). It functions in the pathway cofactor biosynthesis; riboflavin biosynthesis; 2-hydroxy-3-oxobutyl phosphate from D-ribulose 5-phosphate: step 1/1. The protein operates within cofactor biosynthesis; riboflavin biosynthesis; 5-amino-6-(D-ribitylamino)uracil from GTP: step 1/4. In terms of biological role, catalyzes the conversion of D-ribulose 5-phosphate to formate and 3,4-dihydroxy-2-butanone 4-phosphate. Functionally, catalyzes the conversion of GTP to 2,5-diamino-6-ribosylamino-4(3H)-pyrimidinone 5'-phosphate (DARP), formate and pyrophosphate. The protein is Riboflavin biosynthesis protein RibBA of Mycobacterium ulcerans (strain Agy99).